A 165-amino-acid polypeptide reads, in one-letter code: UPF0303 protein Bamb_1459 (165 aa).

The protein belongs to the UPF0303 family.

This chain is UPF0303 protein Bamb_1459, found in Burkholderia ambifaria (strain ATCC BAA-244 / DSM 16087 / CCUG 44356 / LMG 19182 / AMMD) (Burkholderia cepacia (strain AMMD)).